Consider the following 326-residue polypeptide: Glyoxylate/hydroxypyruvate reductase B (326 aa).

Active-site residues include R237 and E266. The active-site Proton donor is H285.

It belongs to the D-isomer specific 2-hydroxyacid dehydrogenase family. GhrB subfamily. As to quaternary structure, homodimer.

It is found in the cytoplasm. It catalyses the reaction glycolate + NADP(+) = glyoxylate + NADPH + H(+). It carries out the reaction (R)-glycerate + NAD(+) = 3-hydroxypyruvate + NADH + H(+). The enzyme catalyses (R)-glycerate + NADP(+) = 3-hydroxypyruvate + NADPH + H(+). Its function is as follows. Catalyzes the NADPH-dependent reduction of glyoxylate and hydroxypyruvate into glycolate and glycerate, respectively. This is Glyoxylate/hydroxypyruvate reductase B from Yersinia pestis bv. Antiqua (strain Nepal516).